The primary structure comprises 70 residues: UPF0434 protein MCA0634 (70 aa).

This sequence belongs to the UPF0434 family.

This Methylococcus capsulatus (strain ATCC 33009 / NCIMB 11132 / Bath) protein is UPF0434 protein MCA0634.